Here is a 518-residue protein sequence, read N- to C-terminus: ATP synthase subunit alpha (518 aa).

ATP is bound at residue 170–177 (GDRQTGKT).

The protein belongs to the ATPase alpha/beta chains family. As to quaternary structure, F-type ATPases have 2 components, CF(1) - the catalytic core - and CF(0) - the membrane proton channel. CF(1) has five subunits: alpha(3), beta(3), gamma(1), delta(1), epsilon(1). CF(0) has three main subunits: a(1), b(2) and c(9-12). The alpha and beta chains form an alternating ring which encloses part of the gamma chain. CF(1) is attached to CF(0) by a central stalk formed by the gamma and epsilon chains, while a peripheral stalk is formed by the delta and b chains.

The protein resides in the cell membrane. It catalyses the reaction ATP + H2O + 4 H(+)(in) = ADP + phosphate + 5 H(+)(out). Produces ATP from ADP in the presence of a proton gradient across the membrane. The alpha chain is a regulatory subunit. This chain is ATP synthase subunit alpha, found in Mycoplasmoides gallisepticum (strain R(low / passage 15 / clone 2)) (Mycoplasma gallisepticum).